Reading from the N-terminus, the 336-residue chain is Tetraacyldisaccharide 4'-kinase (336 aa).

60–67 contacts ATP; sequence TIGGTGKT.

It belongs to the LpxK family.

The catalysed reaction is a lipid A disaccharide + ATP = a lipid IVA + ADP + H(+). It participates in glycolipid biosynthesis; lipid IV(A) biosynthesis; lipid IV(A) from (3R)-3-hydroxytetradecanoyl-[acyl-carrier-protein] and UDP-N-acetyl-alpha-D-glucosamine: step 6/6. Functionally, transfers the gamma-phosphate of ATP to the 4'-position of a tetraacyldisaccharide 1-phosphate intermediate (termed DS-1-P) to form tetraacyldisaccharide 1,4'-bis-phosphate (lipid IVA). This is Tetraacyldisaccharide 4'-kinase from Pseudomonas putida (strain W619).